The following is a 424-amino-acid chain: 3-ketoacyl-CoA thiolase, peroxisomal (424 aa).

The transit peptide at 1–26 (MQRLQVVLGHLRGPADSGWMPQAAPC) directs the protein to the peroxisome. The tract at residues 1 to 26 (MQRLQVVLGHLRGPADSGWMPQAAPC) is PTS2-type peroxisomal targeting signal. A phosphothreonine mark is found at Thr-59 and Thr-60. Cys-123 (acyl-thioester intermediate) is an active-site residue. Active-site proton acceptor residues include His-377 and Cys-408.

It belongs to the thiolase-like superfamily. Thiolase family. In terms of assembly, homodimer. Interacts (via PTS2-type peroxisomal targeting signal region) with PEX7; leading to its translocation into peroxisomes.

Its subcellular location is the peroxisome. It carries out the reaction an acyl-CoA + acetyl-CoA = a 3-oxoacyl-CoA + CoA. It catalyses the reaction 2 acetyl-CoA = acetoacetyl-CoA + CoA. The enzyme catalyses tetradecanoyl-CoA + acetyl-CoA = 3-oxohexadecanoyl-CoA + CoA. The catalysed reaction is hexanoyl-CoA + acetyl-CoA = 3-oxooctanoyl-CoA + CoA. It carries out the reaction 3-oxohexadecanedioyl-CoA + CoA = tetradecanedioyl-CoA + acetyl-CoA. It catalyses the reaction 3-oxo-(6Z,9Z,12Z,15Z,18Z,21Z)-tetracosahexaenoyl-CoA + CoA = (4Z,7Z,10Z,13Z,16Z,19Z)-docosahexaenoyl-CoA + acetyl-CoA. It participates in lipid metabolism; peroxisomal fatty acid beta-oxidation. Functionally, responsible for the thiolytic cleavage of straight chain 3-keto fatty acyl-CoAs (3-oxoacyl-CoAs). Plays an important role in fatty acid peroxisomal beta-oxidation. Catalyzes the cleavage of short, medium, long, and very long straight chain 3-oxoacyl-CoAs. The protein is 3-ketoacyl-CoA thiolase, peroxisomal of Homo sapiens (Human).